The primary structure comprises 119 residues: uncharacterized protein (119 aa).

This is an uncharacterized protein from Bacillus subtilis (strain 168).